Reading from the N-terminus, the 112-residue chain is uncharacterized protein (112 aa).

Residues 1-27 are disordered; the sequence is MIASIGDSAEPPLRRTRRAQQQDRPPT.

This is an uncharacterized protein from Orgyia pseudotsugata multicapsid polyhedrosis virus (OpMNPV).